The chain runs to 555 residues: Hydroxylamine reductase (555 aa).

[4Fe-4S] cluster contacts are provided by Cys3, Cys6, Cys18, and Cys25. Residues His252, Glu276, Cys320, Cys407, Cys435, Cys460, Glu494, and Lys496 each coordinate hybrid [4Fe-2O-2S] cluster. Cys407 carries the cysteine persulfide modification.

Belongs to the HCP family. [4Fe-4S] cluster is required as a cofactor. Requires hybrid [4Fe-2O-2S] cluster as cofactor.

The protein localises to the cytoplasm. The catalysed reaction is A + NH4(+) + H2O = hydroxylamine + AH2 + H(+). Functionally, catalyzes the reduction of hydroxylamine to form NH(3) and H(2)O. This chain is Hydroxylamine reductase, found in Burkholderia lata (strain ATCC 17760 / DSM 23089 / LMG 22485 / NCIMB 9086 / R18194 / 383).